An 87-amino-acid polypeptide reads, in one-letter code: MTILSAITSITRPNKISKSVVSSNGGASLSLSSNSVACATACGGSSYSYSSSYSSSGLGYSYNSSYSSSVGYSSSVGVVIGSCGHCS.

It belongs to the hssA/B family.

The chain is HssA/B-like protein 28 (hssl28) from Dictyostelium discoideum (Social amoeba).